Reading from the N-terminus, the 722-residue chain is Polyribonucleotide nucleotidyltransferase (722 aa).

Mg(2+) contacts are provided by Asp-505 and Asp-511. The KH domain occupies Pro-572–Val-631. An S1 motif domain is found at Gly-641 to Lys-709.

This sequence belongs to the polyribonucleotide nucleotidyltransferase family. Component of the RNA degradosome, which is a multiprotein complex involved in RNA processing and mRNA degradation. Mg(2+) is required as a cofactor.

Its subcellular location is the cytoplasm. It catalyses the reaction RNA(n+1) + phosphate = RNA(n) + a ribonucleoside 5'-diphosphate. Its function is as follows. Involved in mRNA degradation. Catalyzes the phosphorolysis of single-stranded polyribonucleotides processively in the 3'- to 5'-direction. This is Polyribonucleotide nucleotidyltransferase from Marinobacter nauticus (strain ATCC 700491 / DSM 11845 / VT8) (Marinobacter aquaeolei).